Here is a 413-residue protein sequence, read N- to C-terminus: Divalent metal cation transporter MntH (413 aa).

The Cytoplasmic portion of the chain corresponds to 1-19 (MTDNRVENSSGRAARKLRL). Residues 20–39 (ALMGPAFIAAIGYIDPGNFA) traverse the membrane as a helical segment. Residues 40 to 51 (TNIQAGASFGYQ) lie on the Periplasmic side of the membrane. A helical membrane pass occupies residues 52–71 (LLWVVVWANLMAMLIQILSA). Over 72 to 95 (KLGIATGKNLAEQIRDHYPRPVVW) the chain is Cytoplasmic. Residues 96–118 (FYWVQAEIIAMATDLAEFIGAAI) traverse the membrane as a helical segment. Over 119 to 125 (GFKLILG) the chain is Periplasmic. A helical membrane pass occupies residues 126 to 145 (VSLLQGAVLTGIATFLILML). Topologically, residues 146–155 (QRRGQKPLEK) are cytoplasmic. A helical membrane pass occupies residues 156–175 (VIGGLLLFVAAAYIVELFFS). Topologically, residues 176–196 (QPDMAQLGKGMVIPALPNPEA) are periplasmic. The chain crosses the membrane as a helical span at residues 197-220 (VFLAAGVLGATIMPHVIYLHSSLT). Topologically, residues 221–238 (QHLHGGTRQQRYSATKWD) are cytoplasmic. The chain crosses the membrane as a helical span at residues 239 to 258 (VAIAMTIAGFVNLAMMATAA). Residues 259 to 276 (AAFHFSGHTGIADLDQAY) are Periplasmic-facing. The chain crosses the membrane as a helical span at residues 277–297 (LTLEPLLSHAAATVFGLSLVA). Topologically, residues 298 to 327 (AGLSSTVVGTLAGQVVMQGFVRFHIPLWVR) are cytoplasmic. Residues 328 to 344 (RSITMLPSFIVILMGLD) traverse the membrane as a helical segment. The Periplasmic portion of the chain corresponds to 345–350 (PTRILV). A helical transmembrane segment spans residues 351–370 (MSQVLLSFGIALALVPLLIF). Over 371–387 (TSNATLMGELVNTRRVK) the chain is Cytoplasmic. A helical transmembrane segment spans residues 388–406 (QIGWIIVVLVVALNIWLLV). The Periplasmic segment spans residues 407–413 (GTVMGLS).

This sequence belongs to the NRAMP family.

Its subcellular location is the cell inner membrane. In terms of biological role, h(+)-stimulated, divalent metal cation uptake system. This chain is Divalent metal cation transporter MntH, found in Salmonella gallinarum (strain 287/91 / NCTC 13346).